A 250-amino-acid chain; its full sequence is tRNA (guanine-N(7)-)-methyltransferase (250 aa).

Positions 79, 104, 131, and 154 each coordinate S-adenosyl-L-methionine. Asp-154 is an active-site residue. Residues Lys-158, Asp-190, and 228 to 231 contribute to the substrate site; that span reads TKFE.

The protein belongs to the class I-like SAM-binding methyltransferase superfamily. TrmB family.

It carries out the reaction guanosine(46) in tRNA + S-adenosyl-L-methionine = N(7)-methylguanosine(46) in tRNA + S-adenosyl-L-homocysteine. Its pathway is tRNA modification; N(7)-methylguanine-tRNA biosynthesis. Its function is as follows. Catalyzes the formation of N(7)-methylguanine at position 46 (m7G46) in tRNA. The protein is tRNA (guanine-N(7)-)-methyltransferase of Actinobacillus pleuropneumoniae serotype 5b (strain L20).